The chain runs to 277 residues: 5'-nucleotidase SurE (277 aa).

A divalent metal cation contacts are provided by D16, D17, S48, and N101.

Belongs to the SurE nucleotidase family. A divalent metal cation is required as a cofactor.

The protein localises to the cytoplasm. The enzyme catalyses a ribonucleoside 5'-phosphate + H2O = a ribonucleoside + phosphate. Its function is as follows. Nucleotidase that shows phosphatase activity on nucleoside 5'-monophosphates. This Parvibaculum lavamentivorans (strain DS-1 / DSM 13023 / NCIMB 13966) protein is 5'-nucleotidase SurE.